The primary structure comprises 317 residues: Glycerol-3-phosphate dehydrogenase [NAD(P)+] (317 aa).

NADPH-binding residues include W20, R40, R41, and K88. Positions 88 and 116 each coordinate sn-glycerol 3-phosphate. An NADPH-binding site is contributed by S120. Residues K171, D224, S234, R235, and N236 each coordinate sn-glycerol 3-phosphate. K171 (proton acceptor) is an active-site residue. R235 contributes to the NADPH binding site. E261 serves as a coordination point for NADPH.

This sequence belongs to the NAD-dependent glycerol-3-phosphate dehydrogenase family.

The protein resides in the cytoplasm. The catalysed reaction is sn-glycerol 3-phosphate + NAD(+) = dihydroxyacetone phosphate + NADH + H(+). It catalyses the reaction sn-glycerol 3-phosphate + NADP(+) = dihydroxyacetone phosphate + NADPH + H(+). The protein operates within membrane lipid metabolism; glycerophospholipid metabolism. Functionally, catalyzes the reduction of the glycolytic intermediate dihydroxyacetone phosphate (DHAP) to sn-glycerol 3-phosphate (G3P), the key precursor for phospholipid synthesis. This is Glycerol-3-phosphate dehydrogenase [NAD(P)+] from Synechocystis sp. (strain ATCC 27184 / PCC 6803 / Kazusa).